We begin with the raw amino-acid sequence, 360 residues long: Putative F-box protein At1g65770 (360 aa).

The F-box domain maps to A2–T50.

The protein is Putative F-box protein At1g65770 of Arabidopsis thaliana (Mouse-ear cress).